Here is a 79-residue protein sequence, read N- to C-terminus: Sulfur carrier protein TusA (79 aa).

C17 (cysteine persulfide intermediate) is an active-site residue.

It belongs to the sulfur carrier protein TusA family.

It is found in the cytoplasm. Its function is as follows. Sulfur carrier protein which probably makes part of a sulfur-relay system. This chain is Sulfur carrier protein TusA, found in Idiomarina loihiensis (strain ATCC BAA-735 / DSM 15497 / L2-TR).